A 339-amino-acid polypeptide reads, in one-letter code: Anthranilate phosphoribosyltransferase (339 aa).

Residues Gly80, 83–84 (GD), Thr88, 90–93 (NIST), 108–116 (KHGNRSVSS), and Ser120 contribute to the 5-phospho-alpha-D-ribose 1-diphosphate site. Gly80 contributes to the anthranilate binding site. Position 92 (Ser92) interacts with Mg(2+). Asn111 is a binding site for anthranilate. Anthranilate is bound at residue Arg166. The Mg(2+) site is built by Asp225 and Glu226.

It belongs to the anthranilate phosphoribosyltransferase family. As to quaternary structure, homodimer. Mg(2+) is required as a cofactor.

It carries out the reaction N-(5-phospho-beta-D-ribosyl)anthranilate + diphosphate = 5-phospho-alpha-D-ribose 1-diphosphate + anthranilate. It participates in amino-acid biosynthesis; L-tryptophan biosynthesis; L-tryptophan from chorismate: step 2/5. Functionally, catalyzes the transfer of the phosphoribosyl group of 5-phosphorylribose-1-pyrophosphate (PRPP) to anthranilate to yield N-(5'-phosphoribosyl)-anthranilate (PRA). This is Anthranilate phosphoribosyltransferase from Moorella thermoacetica (strain ATCC 39073 / JCM 9320).